The sequence spans 317 residues: Transaldolase (317 aa).

The Schiff-base intermediate with substrate role is filled by lysine 132.

The protein belongs to the transaldolase family. Type 1 subfamily. Homodimer.

It localises to the cytoplasm. It catalyses the reaction D-sedoheptulose 7-phosphate + D-glyceraldehyde 3-phosphate = D-erythrose 4-phosphate + beta-D-fructose 6-phosphate. The protein operates within carbohydrate degradation; pentose phosphate pathway; D-glyceraldehyde 3-phosphate and beta-D-fructose 6-phosphate from D-ribose 5-phosphate and D-xylulose 5-phosphate (non-oxidative stage): step 2/3. Its function is as follows. Transaldolase is important for the balance of metabolites in the pentose-phosphate pathway. This chain is Transaldolase, found in Shewanella denitrificans (strain OS217 / ATCC BAA-1090 / DSM 15013).